A 290-amino-acid polypeptide reads, in one-letter code: MNIKRKPEWLRIKLGEGRNLNYVKGLLKKFSLNTVCEEANCPNQIECFSKKTATFMILGSDCSRSCGFCNVSHGALQPIDPNEPENVANAVAELGLKHVVITSVTRDDLADGGAQHFADVVNQIKSKNKETMIEVLIPDFQGNKEALQKVVQSKPDIINHNMETIPRLYPEIRPKAEYVQSLELLKNVKEMDPEILTKSGVMVGLGEGEEELIEVFKDLRGSGCDFLTVGQYLPPSTKHYPLKAYISPEVFERYKEEALKIGFSFVASSPLVRSSYNAAEALEKHEEMKS.

Residues Cys36, Cys41, Cys47, Cys62, Cys66, Cys69, and Ser275 each coordinate [4Fe-4S] cluster. Positions 48-264 constitute a Radical SAM core domain; it reads FSKKTATFMI…KEEALKIGFS (217 aa).

This sequence belongs to the radical SAM superfamily. Lipoyl synthase family. [4Fe-4S] cluster serves as cofactor.

It localises to the cytoplasm. The enzyme catalyses [[Fe-S] cluster scaffold protein carrying a second [4Fe-4S](2+) cluster] + N(6)-octanoyl-L-lysyl-[protein] + 2 oxidized [2Fe-2S]-[ferredoxin] + 2 S-adenosyl-L-methionine + 4 H(+) = [[Fe-S] cluster scaffold protein] + N(6)-[(R)-dihydrolipoyl]-L-lysyl-[protein] + 4 Fe(3+) + 2 hydrogen sulfide + 2 5'-deoxyadenosine + 2 L-methionine + 2 reduced [2Fe-2S]-[ferredoxin]. The protein operates within protein modification; protein lipoylation via endogenous pathway; protein N(6)-(lipoyl)lysine from octanoyl-[acyl-carrier-protein]: step 2/2. In terms of biological role, catalyzes the radical-mediated insertion of two sulfur atoms into the C-6 and C-8 positions of the octanoyl moiety bound to the lipoyl domains of lipoate-dependent enzymes, thereby converting the octanoylated domains into lipoylated derivatives. This Alkaliphilus metalliredigens (strain QYMF) protein is Lipoyl synthase.